A 232-amino-acid chain; its full sequence is LexA repressor (232 aa).

Positions 1 to 25 (MSDDSSDSTSGAGSGRGRDSGLTER) are disordered. The span at 16-25 (RGRDSGLTER) shows a compositional bias: basic and acidic residues. Residues 46-66 (IREIGDAVGLTSTSSVAHQLR) constitute a DNA-binding region (H-T-H motif). Catalysis depends on for autocatalytic cleavage activity residues S156 and K193.

It belongs to the peptidase S24 family. As to quaternary structure, homodimer.

It catalyses the reaction Hydrolysis of Ala-|-Gly bond in repressor LexA.. Its function is as follows. Represses a number of genes involved in the response to DNA damage (SOS response), including recA and lexA. In the presence of single-stranded DNA, RecA interacts with LexA causing an autocatalytic cleavage which disrupts the DNA-binding part of LexA, leading to derepression of the SOS regulon and eventually DNA repair. This is LexA repressor from Mycolicibacterium vanbaalenii (strain DSM 7251 / JCM 13017 / BCRC 16820 / KCTC 9966 / NRRL B-24157 / PYR-1) (Mycobacterium vanbaalenii).